Consider the following 138-residue polypeptide: Basic phospholipase A2 homolog acutohaemolysin (138 aa).

Residues 1-16 (MRALWIVAVLLVGVEG) form the signal peptide. Cystine bridges form between Cys42–Cys131, Cys44–Cys60, Cys59–Cys111, Cys65–Cys138, Cys66–Cys104, Cys73–Cys97, and Cys91–Cys102. The interval 121–133 (KSFRYHLKPSCKK) is important for membrane-damaging activities in eukaryotes and bacteria; heparin-binding.

Monomer. Expressed by the venom gland.

It is found in the secreted. In terms of biological role, snake venom phospholipase A2 homolog that lacks enzymatic activity. Is myotoxic. Has a strong indirect hemolytic activity and anticoagulant activity. A model of myotoxic mechanism has been proposed: an apo Lys49-PLA2 is activated by the entrance of a hydrophobic molecule (e.g. fatty acid) at the hydrophobic channel of the protein leading to a reorientation of a monomer. This reorientation causes a transition between 'inactive' to 'active' states, causing alignment of C-terminal and membrane-docking sites (MDoS) side-by-side and putting the membrane-disruption sites (MDiS) in the same plane, exposed to solvent and in a symmetric position for both monomers. The MDoS region stabilizes the toxin on membrane by the interaction of charged residues with phospholipid head groups. Subsequently, the MDiS region destabilizes the membrane with penetration of hydrophobic residues. This insertion causes a disorganization of the membrane, allowing an uncontrolled influx of ions (i.e. calcium and sodium), and eventually triggering irreversible intracellular alterations and cell death. The chain is Basic phospholipase A2 homolog acutohaemolysin from Deinagkistrodon acutus (Hundred-pace snake).